A 98-amino-acid chain; its full sequence is MTIDAKHYDVIVAPVITEKATMASEYNKVVFKVTRKATKPQIKEAVEKLFDVKVKSVNTLVRKGKAKVFRGSFGSQSDSKRAVVTLEEGHRIDVTTGL.

This sequence belongs to the universal ribosomal protein uL23 family. As to quaternary structure, part of the 50S ribosomal subunit. Contacts protein L29, and trigger factor when it is bound to the ribosome.

Its function is as follows. One of the early assembly proteins it binds 23S rRNA. One of the proteins that surrounds the polypeptide exit tunnel on the outside of the ribosome. Forms the main docking site for trigger factor binding to the ribosome. In Nitrobacter hamburgensis (strain DSM 10229 / NCIMB 13809 / X14), this protein is Large ribosomal subunit protein uL23.